The following is a 2293-amino-acid chain: Protein Ycf2 A (2293 aa).

G1647–S1654 is an ATP binding site.

It belongs to the Ycf2 family.

Its subcellular location is the plastid. The protein resides in the chloroplast stroma. In terms of biological role, probable ATPase of unknown function. Its presence in a non-photosynthetic plant (Epifagus virginiana) and experiments in tobacco indicate that it has an essential function which is probably not related to photosynthesis. This Crucihimalaya wallichii (Rock-cress) protein is Protein Ycf2 A.